We begin with the raw amino-acid sequence, 492 residues long: Glutamyl-tRNA(Gln) amidotransferase subunit A (492 aa).

Residues K80 and S155 each act as charge relay system in the active site. Residue S179 is the Acyl-ester intermediate of the active site.

This sequence belongs to the amidase family. GatA subfamily. As to quaternary structure, heterotrimer of A, B and C subunits.

It catalyses the reaction L-glutamyl-tRNA(Gln) + L-glutamine + ATP + H2O = L-glutaminyl-tRNA(Gln) + L-glutamate + ADP + phosphate + H(+). Functionally, allows the formation of correctly charged Gln-tRNA(Gln) through the transamidation of misacylated Glu-tRNA(Gln) in organisms which lack glutaminyl-tRNA synthetase. The reaction takes place in the presence of glutamine and ATP through an activated gamma-phospho-Glu-tRNA(Gln). This is Glutamyl-tRNA(Gln) amidotransferase subunit A from Mycobacteroides abscessus (strain ATCC 19977 / DSM 44196 / CCUG 20993 / CIP 104536 / JCM 13569 / NCTC 13031 / TMC 1543 / L948) (Mycobacterium abscessus).